The primary structure comprises 96 residues: Small ribosomal subunit protein bS21 (96 aa).

Positions 52–96 are disordered; the sequence is RRARKQARKTAIREGLIAAPKPKARPVSPRRPAAPAPASSPVGAA. Residues 69-96 show a composition bias toward low complexity; that stretch reads AAPKPKARPVSPRRPAAPAPASSPVGAA.

It belongs to the bacterial ribosomal protein bS21 family.

The polypeptide is Small ribosomal subunit protein bS21 (Methylobacterium nodulans (strain LMG 21967 / CNCM I-2342 / ORS 2060)).